The primary structure comprises 547 residues: Phosphomethylpyrimidine synthase (547 aa).

Residues N150, M179, Y208, H244, 264-266, 305-308, and E344 contribute to the substrate site; these read SRG and DGLR. H348 contributes to the Zn(2+) binding site. Residue Y371 coordinates substrate. Residue H412 coordinates Zn(2+). 3 residues coordinate [4Fe-4S] cluster: C492, C495, and C500.

Belongs to the ThiC family. It depends on [4Fe-4S] cluster as a cofactor.

It catalyses the reaction 5-amino-1-(5-phospho-beta-D-ribosyl)imidazole + S-adenosyl-L-methionine = 4-amino-2-methyl-5-(phosphooxymethyl)pyrimidine + CO + 5'-deoxyadenosine + formate + L-methionine + 3 H(+). The protein operates within cofactor biosynthesis; thiamine diphosphate biosynthesis. In terms of biological role, catalyzes the synthesis of the hydroxymethylpyrimidine phosphate (HMP-P) moiety of thiamine from aminoimidazole ribotide (AIR) in a radical S-adenosyl-L-methionine (SAM)-dependent reaction. The chain is Phosphomethylpyrimidine synthase from Nocardia farcinica (strain IFM 10152).